Here is a 37-residue protein sequence, read N- to C-terminus: Large ribosomal subunit protein bL36 (37 aa).

This sequence belongs to the bacterial ribosomal protein bL36 family.

The chain is Large ribosomal subunit protein bL36 from Solidesulfovibrio magneticus (strain ATCC 700980 / DSM 13731 / RS-1) (Desulfovibrio magneticus).